Consider the following 441-residue polypeptide: Mitochondrial inner membrane protein OXA1L (441 aa).

Residues 1-113 (MALALMCGRR…QAAAEQSFAE (113 aa)) are Mitochondrial intermembrane-facing. Residues 114 to 134 (LGLGSYTPVGLIQNLLEFMHV) traverse the membrane as a helical segment. The Mitochondrial matrix segment spans residues 135 to 139 (NLGLP). Residues 140–160 (WWGAIAACTVLARCLVFPLIV) form a helical membrane-spanning segment. Residues 161–212 (KGQREAAKIHNHLPEIQKFSARIREAKLTGNHTEFYRASSEMTFYQKKHDIK) are Mitochondrial intermembrane-facing. A helical membrane pass occupies residues 213–233 (LFRPLILPLTQAPIFISFFIA). At 234-260 (LREMANLPVPSLQTGGLWWFQDLTLSD) the chain is on the mitochondrial matrix side. A helical transmembrane segment spans residues 261-281 (PIYVLPLVVTATMWGVLELGA). The Mitochondrial intermembrane portion of the chain corresponds to 282–298 (ETGMQSSDLQWMRNFIR). The helical transmembrane segment at 299–319 (LMPLAVLPITIHFPTAVFMYW) threads the bilayer. At 320-441 (LSSNMFSLGQ…SKQPWRDTLG (122 aa)) the chain is on the mitochondrial matrix side. Ser-364 bears the Phosphoserine mark. At Thr-400 the chain carries Phosphothreonine. A disordered region spans residues 405-441 (PLLQHGKNDPPNTPNSSSSSSSSNKAKSKQPWRDTLG). Residues 418–429 (PNSSSSSSSSNK) are compositionally biased toward low complexity.

This sequence belongs to the OXA1/ALB3/YidC family. As to quaternary structure, monomer; predominantly monomeric at low salt concentrations. Homooligomer; predominantly homooligomeric at high salt concentrations. Associates with the mitochondrial ribosome. Associates preferentially as a dimer with the large ribosomal subunit 39S of the mitochondrial ribosome. Interacts with OXA1L; promoting cotranslational quality control in mitochondria.

The protein localises to the mitochondrion inner membrane. Functionally, mitochondrial membrane insertase that mediates the cotranslational insertion of integral membrane proteins into the mitochondrial inner membrane. Essential for the activity and assembly of cytochrome oxidase. Required for the correct biogenesis of ATP synthase and complex I in mitochondria. The chain is Mitochondrial inner membrane protein OXA1L (OXA1L) from Bos taurus (Bovine).